The following is a 542-amino-acid chain: Formate--tetrahydrofolate ligase (542 aa).

Residue 53-60 (TPAGEGKT) coordinates ATP.

It belongs to the formate--tetrahydrofolate ligase family.

The enzyme catalyses (6S)-5,6,7,8-tetrahydrofolate + formate + ATP = (6R)-10-formyltetrahydrofolate + ADP + phosphate. It participates in one-carbon metabolism; tetrahydrofolate interconversion. The protein is Formate--tetrahydrofolate ligase of Thermotoga petrophila (strain ATCC BAA-488 / DSM 13995 / JCM 10881 / RKU-1).